The primary structure comprises 303 residues: Oxygen-dependent coproporphyrinogen-III oxidase (303 aa).

Substrate is bound at residue serine 93. A divalent metal cation-binding residues include histidine 97 and histidine 107. Catalysis depends on histidine 107, which acts as the Proton donor. Asparagine 109–arginine 111 is a substrate binding site. A divalent metal cation contacts are provided by histidine 146 and histidine 176. Residues tyrosine 241–glycine 276 are important for dimerization. Glycine 259–arginine 261 is a substrate binding site.

The protein belongs to the aerobic coproporphyrinogen-III oxidase family. Homodimer. Requires a divalent metal cation as cofactor.

It is found in the cytoplasm. The catalysed reaction is coproporphyrinogen III + O2 + 2 H(+) = protoporphyrinogen IX + 2 CO2 + 2 H2O. The protein operates within porphyrin-containing compound metabolism; protoporphyrin-IX biosynthesis; protoporphyrinogen-IX from coproporphyrinogen-III (O2 route): step 1/1. In terms of biological role, involved in the heme biosynthesis. Catalyzes the aerobic oxidative decarboxylation of propionate groups of rings A and B of coproporphyrinogen-III to yield the vinyl groups in protoporphyrinogen-IX. This Pseudomonas putida (strain ATCC 700007 / DSM 6899 / JCM 31910 / BCRC 17059 / LMG 24140 / F1) protein is Oxygen-dependent coproporphyrinogen-III oxidase.